The chain runs to 3390 residues: Genome polyprotein (3390 aa).

The interval 1 to 15 (MNNQRKKTGKPSINM) is interaction with host EXOC1. Residues 1-100 (MNNQRKKTGK…MLSIINKRKK (100 aa)) are Cytoplasmic-facing. Positions 37–72 (LLNGQGPMKLVMAFIAFLRFLAIPPTAGVLARWGTF) are hydrophobic; homodimerization of capsid protein C. A propeptide spans 101–114 (TSLCLMMMLPATLA) (ER anchor for the capsid protein C, removed in mature form by serine protease NS3). The helical transmembrane segment at 101–118 (TSLCLMMMLPATLAFHLT) threads the bilayer. At 119 to 243 (SRDGEPRMIV…VEKVETWALR (125 aa)) the chain is on the extracellular side. Asn-183 carries N-linked (GlcNAc...) asparagine; by host glycosylation. The helical transmembrane segment at 244 to 264 (HPGFTILALFLAHYIGTSLTQ) threads the bilayer. A topological domain (cytoplasmic) is located at residue Lys-265. The chain crosses the membrane as a helical span at residues 266–280 (VVIFILLMLVTPSMT). Residues 281 to 723 (MRCVGVGNRD…VHQIFGSAYT (443 aa)) are Extracellular-facing. Cystine bridges form between Cys-283–Cys-310, Cys-340–Cys-401, Cys-354–Cys-385, and Cys-372–Cys-396. N-linked (GlcNAc...) asparagine; by host glycosylation is present at Asn-347. The segment at 378–391 (DRGWGNGCGLFGKG) is fusion peptide. The N-linked (GlcNAc...) asparagine; by host glycan is linked to Asn-433. Intrachain disulfides connect Cys-463/Cys-563 and Cys-580/Cys-611. A helical membrane pass occupies residues 724–744 (ALFSGVSWIMKIGIGVLLTWI). Over 745–750 (GLNSKN) the chain is Cytoplasmic. The helical transmembrane segment at 751–771 (TSMSFSCIAIGIITLYLGVVV) threads the bilayer. Residues 772-1193 (QADMGCVINW…MIGSNASDRM (422 aa)) lie on the Extracellular side of the membrane. 6 cysteine pairs are disulfide-bonded: Cys-777–Cys-788, Cys-828–Cys-916, Cys-952–Cys-996, Cys-1053–Cys-1102, Cys-1064–Cys-1086, and Cys-1085–Cys-1089. Asn-903 and Asn-980 each carry an N-linked (GlcNAc...) asparagine; by host glycan. Asn-1132 and Asn-1188 each carry an N-linked (GlcNAc...) asparagine; by host glycan. Residues 1194–1218 (GMGVTYLALIATFKIQPFLALGFFL) traverse the membrane as a helical segment. The Cytoplasmic portion of the chain corresponds to 1219–1224 (RKLTSR). Residues 1225 to 1243 (ENLLLGVGLAMAATLRLPE) form a helical membrane-spanning segment. Topologically, residues 1244-1267 (DIEQMANGIALGLMALKLITQFET) are lumenal. Residues 1268 to 1288 (YQLWTALVSLTCSNTIFTLTV) form a helical membrane-spanning segment. Ala-1289 is a topological domain (cytoplasmic). The chain crosses the membrane as a helical span at residues 1290 to 1308 (WRTATLILAGISLLPVCQS). Residues 1309-1315 (SSMRKTD) lie on the Lumenal side of the membrane. A helical transmembrane segment spans residues 1316–1336 (WLPMTVAAMGVPPLPLFIFSL). Residues 1337–1344 (KDTLKRRS) are Cytoplasmic-facing. A helical membrane pass occupies residues 1345–1365 (WPLNEGVMAVGLVSILASSLL). Residues 1366–1368 (RND) lie on the Lumenal side of the membrane. The helical transmembrane segment at 1369–1389 (VPMAGPLVAGGLLIACYVITG) threads the bilayer. At 1390–1443 (TSADLTVEKAADVTWEEEAEQTGVSHNLMITVDDDGTMRIKDDETENILTVLLK) the chain is on the cytoplasmic side. The interacts with and activates NS3 protease stretch occupies residues 1396 to 1435 (VEKAADVTWEEEAEQTGVSHNLMITVDDDGTMRIKDDETE). An intramembrane region (helical) is located at residues 1444-1464 (TALLIVSGIFPCSIPATLLVW). The Cytoplasmic segment spans residues 1465–2146 (HTWQKQTQRS…VEELPETMET (682 aa)). One can recognise a Peptidase S7 domain in the interval 1474–1651 (SGVLWDVPSP…NAEPDGPTPE (178 aa)). Active-site charge relay system; for serine protease NS3 activity residues include His-1524, Asp-1548, and Ser-1608. The region spanning 1654 to 1810 (EEMFKKRNLT…QSNAPIQDEE (157 aa)) is the Helicase ATP-binding domain. Positions 1658–1661 (KKRN) are important for RNA-binding. 1667–1674 (LHPGSGKT) is an ATP binding site. A DEAH box motif is present at residues 1758 to 1761 (DEAH). In terms of domain architecture, Helicase C-terminal spans 1821–1986 (GNEWITDFVG…GIIPALFEPE (166 aa)). The residue at position 1862 (Lys-1862) is an N6-acetyllysine; by host. The chain crosses the membrane as a helical span at residues 2147–2167 (LLLLGLMILLTGGAMLFLISG). The Lumenal segment spans residues 2168–2169 (KG). The segment at residues 2170-2190 (IGKTSIGLICVIASSGMLWMA) is an intramembrane region (helical). Residue Asp-2191 is a topological domain, lumenal. The helical transmembrane segment at 2192 to 2212 (VPLQWIASAIVLEFFMMVLLI) threads the bilayer. Topologically, residues 2213-2227 (PEPEKQRTPQDNQLA) are cytoplasmic. The helical transmembrane segment at 2228–2248 (YVVIGILTLAAIVAANEMGLL) threads the bilayer. The Lumenal portion of the chain corresponds to 2249-2273 (ETTKRDLGMSKEPGVVSPTSYLDVD). Residues 2274 to 2294 (LHPASAWTLYAVATTVITPML) constitute an intramembrane region (helical). Topologically, residues 2295 to 2305 (RHTIENSTANV) are lumenal. N-linked (GlcNAc...) asparagine; by host glycosylation is found at Asn-2300 and Asn-2304. Residues 2306–2326 (SLAAIANQAVVLMGLDKGWPI) constitute an intramembrane region (helical). The Lumenal portion of the chain corresponds to 2327-2346 (SKMDLGVPLLALGCYSQVNP). The chain crosses the membrane as a helical span at residues 2347–2367 (LTLIAAVLLLVTHYAIIGPGL). At 2368 to 2412 (QAKATREAQKRTAAGIMKNPTVDGIMTIDLDPVIYDSKFEKQLGQ) the chain is on the cytoplasmic side. The chain crosses the membrane as a helical span at residues 2413–2433 (VMLLVLCAVQLLLMRTSWALC). At 2434–2458 (EVLTLATGPITTLWEGSPGKFWNTT) the chain is on the lumenal side. Asn-2456 carries an N-linked (GlcNAc...) asparagine; by host glycan. The helical transmembrane segment at 2459-2479 (IAVSMANIFRGSYLAGAGLAF) threads the bilayer. Residues 2480–3390 (SIMKSVGTGK…KEEESEGAIW (911 aa)) are Cytoplasmic-facing. Residues 2492-2753 (TGSQGETLGE…DVDLGAGTRH (262 aa)) enclose the mRNA cap 0-1 NS5-type MT domain. Ser-2546 serves as a coordination point for S-adenosyl-L-methionine. A Phosphoserine modification is found at Ser-2546. Lys-2551 serves as the catalytic For 2'-O-MTase activity. Positions 2567–2570 (VIDL) match the SUMO-interacting motif motif. 6 residues coordinate S-adenosyl-L-methionine: Gly-2576, Trp-2577, Thr-2594, Lys-2595, Asp-2621, and Val-2622. Asp-2636 serves as the catalytic For 2'-O-MTase activity. Ile-2637 contributes to the S-adenosyl-L-methionine binding site. Active-site for 2'-O-MTase activity residues include Lys-2670 and Glu-2706. S-adenosyl-L-methionine is bound at residue Tyr-2708. Positions 2927, 2931, 2936, and 2939 each coordinate Zn(2+). Residues 3018–3168 (AMYADDTAGW…PIDDRFANAL (151 aa)) enclose the RdRp catalytic domain. Zn(2+) contacts are provided by His-3202, Cys-3218, and Cys-3337.

In the N-terminal section; belongs to the class I-like SAM-binding methyltransferase superfamily. mRNA cap 0-1 NS5-type methyltransferase family. Homodimer. Interacts (via N-terminus) with host EXOC1 (via C-terminus); this interaction results in EXOC1 degradation through the proteasome degradation pathway. As to quaternary structure, forms heterodimers with envelope protein E in the endoplasmic reticulum and Golgi. In terms of assembly, homodimer; in the endoplasmic reticulum and Golgi. Interacts with protein prM. Interacts with non-structural protein 1. Homodimer; Homohexamer when secreted. Interacts with envelope protein E. As to quaternary structure, interacts (via N-terminus) with serine protease NS3. In terms of assembly, forms a heterodimer with serine protease NS3. May form homooligomers. Forms a heterodimer with NS2B. Interacts with NS4B. Interacts with unphosphorylated RNA-directed RNA polymerase NS5; this interaction stimulates RNA-directed RNA polymerase NS5 guanylyltransferase activity. As to quaternary structure, interacts with host MAVS; this interaction inhibits the synthesis of IFN-beta. Interacts with host AUP1; the interaction occurs in the presence of Dengue virus NS4B and induces lipophagy which facilitates production of virus progeny particles. In terms of assembly, interacts with serine protease NS3. Homodimer. Interacts with host STAT2; this interaction inhibits the phosphorylation of the latter, and, when all viral proteins are present (polyprotein), targets STAT2 for degradation. Interacts with serine protease NS3. Specific enzymatic cleavages in vivo yield mature proteins. Cleavages in the lumen of endoplasmic reticulum are performed by host signal peptidase, whereas cleavages in the cytoplasmic side are performed by serine protease NS3. Signal cleavage at the 2K-4B site requires a prior NS3 protease-mediated cleavage at the 4A-2K site. In terms of processing, cleaved in post-Golgi vesicles by a host furin, releasing the mature small envelope protein M, and peptide pr. This cleavage is incomplete as up to 30% of viral particles still carry uncleaved prM. Post-translationally, N-glycosylated. N-glycosylated. The excreted form is glycosylated and this is required for efficient secretion of the protein from infected cells. In terms of processing, acetylated by host KAT5. Acetylation modulates NS3 RNA-binding and unwinding activities and plays an important positive role for viral replication. Post-translationally, sumoylation of RNA-directed RNA polymerase NS5 increases NS5 protein stability allowing proper viral RNA replication. Phosphorylated on serines residues. This phosphorylation may trigger NS5 nuclear localization.

Its subcellular location is the virion. The protein resides in the host nucleus. It is found in the host cytoplasm. The protein localises to the host perinuclear region. It localises to the secreted. Its subcellular location is the virion membrane. The protein resides in the host endoplasmic reticulum membrane. It is found in the host mitochondrion. The catalysed reaction is Selective hydrolysis of -Xaa-Xaa-|-Yaa- bonds in which each of the Xaa can be either Arg or Lys and Yaa can be either Ser or Ala.. The enzyme catalyses RNA(n) + a ribonucleoside 5'-triphosphate = RNA(n+1) + diphosphate. It catalyses the reaction a ribonucleoside 5'-triphosphate + H2O = a ribonucleoside 5'-diphosphate + phosphate + H(+). It carries out the reaction ATP + H2O = ADP + phosphate + H(+). The catalysed reaction is a 5'-end (5'-triphosphoguanosine)-ribonucleoside in mRNA + S-adenosyl-L-methionine = a 5'-end (N(7)-methyl 5'-triphosphoguanosine)-ribonucleoside in mRNA + S-adenosyl-L-homocysteine. The enzyme catalyses a 5'-end (N(7)-methyl 5'-triphosphoguanosine)-ribonucleoside in mRNA + S-adenosyl-L-methionine = a 5'-end (N(7)-methyl 5'-triphosphoguanosine)-(2'-O-methyl-ribonucleoside) in mRNA + S-adenosyl-L-homocysteine + H(+). Functionally, plays a role in virus budding by binding to the cell membrane and gathering the viral RNA into a nucleocapsid that forms the core of a mature virus particle. During virus entry, may induce genome penetration into the host cytoplasm after hemifusion induced by the surface proteins. Can migrate to the cell nucleus where it modulates host functions. Overcomes the anti-viral effects of host EXOC1 by sequestering and degrading the latter through the proteasome degradation pathway. In terms of biological role, inhibits RNA silencing by interfering with host Dicer. Prevents premature fusion activity of envelope proteins in trans-Golgi by binding to envelope protein E at pH6.0. After virion release in extracellular space, gets dissociated from E dimers. Its function is as follows. Acts as a chaperone for envelope protein E during intracellular virion assembly by masking and inactivating envelope protein E fusion peptide. prM is the only viral peptide matured by host furin in the trans-Golgi network probably to avoid catastrophic activation of the viral fusion activity in acidic Golgi compartment prior to virion release. prM-E cleavage is inefficient, and many virions are only partially matured. These uncleaved prM would play a role in immune evasion. Functionally, may play a role in virus budding. Exerts cytotoxic effects by activating a mitochondrial apoptotic pathway through M ectodomain. May display a viroporin activity. In terms of biological role, binds to host cell surface receptor and mediates fusion between viral and cellular membranes. Envelope protein is synthesized in the endoplasmic reticulum in the form of heterodimer with protein prM. They play a role in virion budding in the ER, and the newly formed immature particle is covered with 60 spikes composed of heterodimer between precursor prM and envelope protein E. The virion is transported to the Golgi apparatus where the low pH causes dissociation of PrM-E heterodimers and formation of E homodimers. prM-E cleavage is inefficient, and many virions are only partially matured. These uncleaved prM would play a role in immune evasion. Involved in immune evasion, pathogenesis and viral replication. Once cleaved off the polyprotein, is targeted to three destinations: the viral replication cycle, the plasma membrane and the extracellular compartment. Essential for viral replication. Required for formation of the replication complex and recruitment of other non-structural proteins to the ER-derived membrane structures. Excreted as a hexameric lipoparticle that plays a role against host immune response. Antagonizing the complement function. Binds to the host macrophages and dendritic cells. Inhibits signal transduction originating from Toll-like receptor 3 (TLR3). Its function is as follows. Disrupts the host endothelial glycocalyx layer of host pulmonary microvascular endothelial cells, inducing degradation of sialic acid and shedding of heparan sulfate proteoglycans. NS1 induces expression of sialidases, heparanase, and activates cathepsin L, which activates heparanase via enzymatic cleavage. These effects are probably linked to the endothelial hyperpermeability observed in severe dengue disease. Functionally, component of the viral RNA replication complex that functions in virion assembly and antagonizes the host immune response. In terms of biological role, required cofactor for the serine protease function of NS3. May have membrane-destabilizing activity and form viroporins. Displays three enzymatic activities: serine protease, NTPase and RNA helicase. NS3 serine protease, in association with NS2B, performs its autocleavage and cleaves the polyprotein at dibasic sites in the cytoplasm: C-prM, NS2A-NS2B, NS2B-NS3, NS3-NS4A, NS4A-2K and NS4B-NS5. NS3 RNA helicase binds RNA and unwinds dsRNA in the 3' to 5' direction. Its function is as follows. Regulates the ATPase activity of the NS3 helicase activity. NS4A allows NS3 helicase to conserve energy during unwinding. Plays a role in the inhibition of the host innate immune response. Interacts with host MAVS and thereby prevents the interaction between RIGI and MAVS. In turn, IFN-beta production is impaired. Interacts with host AUP1 which mediates induction of lipophagy in host cells and facilitates production of virus progeny particles. Functionally, functions as a signal peptide for NS4B and is required for the interferon antagonism activity of the latter. In terms of biological role, induces the formation of ER-derived membrane vesicles where the viral replication takes place. Inhibits interferon (IFN)-induced host STAT1 phosphorylation and nuclear translocation, thereby preventing the establishment of cellular antiviral state by blocking the IFN-alpha/beta pathway. Replicates the viral (+) and (-) RNA genome, and performs the capping of genomes in the cytoplasm. NS5 methylates viral RNA cap at guanine N-7 and ribose 2'-O positions. Besides its role in RNA genome replication, also prevents the establishment of cellular antiviral state by blocking the interferon-alpha/beta (IFN-alpha/beta) signaling pathway. Inhibits host TYK2 and STAT2 phosphorylation, thereby preventing activation of JAK-STAT signaling pathway. In Dengue virus type 3 (strain China/80-2/1980) (DENV-3), this protein is Genome polyprotein.